A 118-amino-acid polypeptide reads, in one-letter code: Ribonuclease P protein component (118 aa).

This sequence belongs to the RnpA family. As to quaternary structure, consists of a catalytic RNA component (M1 or rnpB) and a protein subunit.

The catalysed reaction is Endonucleolytic cleavage of RNA, removing 5'-extranucleotides from tRNA precursor.. Its function is as follows. RNaseP catalyzes the removal of the 5'-leader sequence from pre-tRNA to produce the mature 5'-terminus. It can also cleave other RNA substrates such as 4.5S RNA. The protein component plays an auxiliary but essential role in vivo by binding to the 5'-leader sequence and broadening the substrate specificity of the ribozyme. The polypeptide is Ribonuclease P protein component (Shewanella baltica (strain OS155 / ATCC BAA-1091)).